The chain runs to 132 residues: Ribonuclease P protein component (132 aa).

The protein belongs to the RnpA family. Consists of a catalytic RNA component (M1 or rnpB) and a protein subunit.

The catalysed reaction is Endonucleolytic cleavage of RNA, removing 5'-extranucleotides from tRNA precursor.. In terms of biological role, RNaseP catalyzes the removal of the 5'-leader sequence from pre-tRNA to produce the mature 5'-terminus. It can also cleave other RNA substrates such as 4.5S RNA. The protein component plays an auxiliary but essential role in vivo by binding to the 5'-leader sequence and broadening the substrate specificity of the ribozyme. The protein is Ribonuclease P protein component of Marinomonas sp. (strain MWYL1).